The primary structure comprises 404 residues: 5-azacytidine-induced protein 2 (404 aa).

Positions 1–198 (MDTLVEDDIC…TELQKARQTG (198 aa)) are homodimerization. The stretch at 40–198 (ALVTAYEDIK…TELQKARQTG (159 aa)) forms a coiled coil. The tract at residues 229–269 (SDHMQHAYWELRREMANLHLVTRVQAELLRQLKTAAAGKAC) is interaction with TBK1 and IKBKE. Phosphoserine is present on S330. 2 disordered regions span residues 332–351 (TDNERLTPNDGADFQEHNSY) and 356–390 (LEDNSWVFPSPPKSSETAFGESKSKILPSPNLPPL). A Phosphoserine modification is found at S365.

Homodimer. Interacts with IKBKE, TBK1 and TICAM1. Interacts with TAX1BP1. Interacts with CALCOCO2. Post-translationally, ubiquitinated via 'Lys-48'-linked polyubiquitination by TRIM38, leading to its degradation.

It is found in the cytoplasm. In terms of biological role, adapter protein which binds TBK1 and IKBKE playing a role in antiviral innate immunity. Activates serine/threonine-protein kinase TBK1 and facilitates its oligomerization. Enhances the phosphorylation of NF-kappa-B p65 subunit RELA by TBK1. Promotes TBK1-induced as well as TNF-alpha or PMA-induced activation of NF-kappa-B. Participates in IFNB promoter activation via TICAM1. This is 5-azacytidine-induced protein 2 (Azi2) from Rattus norvegicus (Rat).